Here is a 425-residue protein sequence, read N- to C-terminus: Adenosylhomocysteinase (425 aa).

Residues T60, D132, and E157 each coordinate substrate. NAD(+) is bound at residue 158-160 (TTT). Residues K187 and D191 each contribute to the substrate site. Residues N192, 221-226 (GYGWCG), E244, N279, 300-302 (SGH), and N347 each bind NAD(+).

Belongs to the adenosylhomocysteinase family. NAD(+) serves as cofactor.

The protein resides in the cytoplasm. It carries out the reaction S-adenosyl-L-homocysteine + H2O = L-homocysteine + adenosine. It participates in amino-acid biosynthesis; L-homocysteine biosynthesis; L-homocysteine from S-adenosyl-L-homocysteine: step 1/1. In terms of biological role, may play a key role in the regulation of the intracellular concentration of adenosylhomocysteine. The protein is Adenosylhomocysteinase of Nostoc sp. (strain PCC 7120 / SAG 25.82 / UTEX 2576).